We begin with the raw amino-acid sequence, 509 residues long: Light-independent protochlorophyllide reductase subunit B (509 aa).

Residue Asp36 coordinates [4Fe-4S] cluster. Asp295 functions as the Proton donor in the catalytic mechanism. 430 to 431 contributes to the substrate binding site; it reads GM.

The protein belongs to the ChlB/BchB/BchZ family. In terms of assembly, protochlorophyllide reductase is composed of three subunits; ChlL, ChlN and ChlB. Forms a heterotetramer of two ChlB and two ChlN subunits. Requires [4Fe-4S] cluster as cofactor.

Its subcellular location is the plastid. It localises to the chloroplast. The enzyme catalyses chlorophyllide a + oxidized 2[4Fe-4S]-[ferredoxin] + 2 ADP + 2 phosphate = protochlorophyllide a + reduced 2[4Fe-4S]-[ferredoxin] + 2 ATP + 2 H2O. Its pathway is porphyrin-containing compound metabolism; chlorophyll biosynthesis (light-independent). Its function is as follows. Component of the dark-operative protochlorophyllide reductase (DPOR) that uses Mg-ATP and reduced ferredoxin to reduce ring D of protochlorophyllide (Pchlide) to form chlorophyllide a (Chlide). This reaction is light-independent. The NB-protein (ChlN-ChlB) is the catalytic component of the complex. The protein is Light-independent protochlorophyllide reductase subunit B of Mesostigma viride (Green alga).